We begin with the raw amino-acid sequence, 311 residues long: Aspartate carbamoyltransferase catalytic subunit (311 aa).

Residues Arg55 and Thr56 each contribute to the carbamoyl phosphate site. Position 85 (Lys85) interacts with L-aspartate. Arg106, His135, and Gln138 together coordinate carbamoyl phosphate. Arg168 and Arg230 together coordinate L-aspartate. Residues Leu268 and Pro269 each contribute to the carbamoyl phosphate site.

Belongs to the aspartate/ornithine carbamoyltransferase superfamily. ATCase family. In terms of assembly, heterododecamer (2C3:3R2) of six catalytic PyrB chains organized as two trimers (C3), and six regulatory PyrI chains organized as three dimers (R2).

It carries out the reaction carbamoyl phosphate + L-aspartate = N-carbamoyl-L-aspartate + phosphate + H(+). The protein operates within pyrimidine metabolism; UMP biosynthesis via de novo pathway; (S)-dihydroorotate from bicarbonate: step 2/3. Catalyzes the condensation of carbamoyl phosphate and aspartate to form carbamoyl aspartate and inorganic phosphate, the committed step in the de novo pyrimidine nucleotide biosynthesis pathway. This Escherichia fergusonii (strain ATCC 35469 / DSM 13698 / CCUG 18766 / IAM 14443 / JCM 21226 / LMG 7866 / NBRC 102419 / NCTC 12128 / CDC 0568-73) protein is Aspartate carbamoyltransferase catalytic subunit.